The chain runs to 903 residues: MTPALTETVPQGPGAHLAPSFALQSLNSDTIICMDNSQAVEHISLPKANGPKVADKKQLLKTEFMNGNSIGSQTSGHYQTVFLLTSNTALSLPNKGSSTWKMENQDVCKQRFHITKGSPSLPNGMSYQPERKAKRELFPGCVSQLLADVHKLWDVSLTKTQGTEGICLPECMLNGHRGTESLAVSSCPSLISHVSANVPSVASVKAVGTNLLLKCLNHQQVLLNRARRNQKRLQSYLAQHAVQHFNQQIRAFVNHQIHDKPAGIFDSQPTKVINNNLNVGSSGISSATSDGLKNGVYHSVKRFSVSAKEILKQIKKDFDSDATGSSSDEDWDEKARQNSDECNAERSWLSVRTRIGSRWVWLQSQISELEYKIQHLTDLHSQIRKAKGTLKFEEPSKGNFKQKLWLPDSEMLLSLAERMPKSPQGTNPSPTNDLDMSPSSPTLLLRNIEKQSARLTEIVSSLTVPLLSPNDSAKSSVYKRVANGFSDRMHTDGFPSFNEFCEQQVKRRKKVRVKASSALGSNLCSSARTRPLQALKKRKLYKLSAEYSYVNKVNLFSSPVYQYEELPSNGNHCSTWKCSKVLHRPWLMAQNACEADSCFHPVLSFPYELPLNVHLAALPMKNHNIKGNSVDSIALRGELDKSQSYVSASWSTECTSSYSPDPQTPAHSWERRHRSESEADAALLESGLTTPVSTQKSSAQQLLAHESSSMVCAARRRLRSGNSYDINNIVIPMSLIAPTKLEKLKYKEIITPSWKEVVLEPLESPAHDMPEDLSDEAYISRHEKYELKEKARWSLWDHSKRPKRNRSSSYSFGTSPRTVLLSCECSCSPNSQAPSEALPSDTGGYRTLHFSHESPKGKTIHWERRVFPLTEEPAMELLGKCPSQAQVSTVDNQQCPKNDCDYT.

Disordered regions lie at residues 319-343, 419-441, and 652-676; these read DSDATGSSSDEDWDEKARQNSDECN, MPKSPQGTNPSPTNDLDMSPSSP, and TECTSSYSPDPQTPAHSWERRHRSE. Polar residues-rich tracts occupy residues 423–441 and 652–661; these read PQGTNPSPTNDLDMSPSSP and TECTSSYSPD. The 115-residue stretch at 748-862 folds into the PEHE domain; sequence EIITPSWKEV…ESPKGKTIHW (115 aa).

This is KAT8 regulatory NSL complex subunit 1-like protein (kansl1l) from Xenopus tropicalis (Western clawed frog).